A 724-amino-acid polypeptide reads, in one-letter code: Ribosomal RNA large subunit methyltransferase K/L (724 aa).

In terms of domain architecture, THUMP spans 42 to 153 (DAQRLVLWSR…KGRATLSVDL (112 aa)).

The protein belongs to the methyltransferase superfamily. RlmKL family.

The protein resides in the cytoplasm. It carries out the reaction guanosine(2445) in 23S rRNA + S-adenosyl-L-methionine = N(2)-methylguanosine(2445) in 23S rRNA + S-adenosyl-L-homocysteine + H(+). It catalyses the reaction guanosine(2069) in 23S rRNA + S-adenosyl-L-methionine = N(2)-methylguanosine(2069) in 23S rRNA + S-adenosyl-L-homocysteine + H(+). Functionally, specifically methylates the guanine in position 2445 (m2G2445) and the guanine in position 2069 (m7G2069) of 23S rRNA. The chain is Ribosomal RNA large subunit methyltransferase K/L from Xylella fastidiosa (strain 9a5c).